A 179-amino-acid chain; its full sequence is Cytochrome b6-f complex iron-sulfur subunit 1 (179 aa).

Residues 21-43 (LLTFGTVTGVALGALYPVVNYFI) form a helical membrane-spanning segment. The 102-residue stretch at 61 to 162 (GNDVSVSKFL…AKTENDKIVL (102 aa)) folds into the Rieske domain. [2Fe-2S] cluster is bound by residues C108, H110, C126, and H129. C113 and C128 are joined by a disulfide.

This sequence belongs to the Rieske iron-sulfur protein family. In terms of assembly, the 4 large subunits of the cytochrome b6-f complex are cytochrome b6, subunit IV (17 kDa polypeptide, PetD), cytochrome f and the Rieske protein, while the 4 small subunits are PetG, PetL, PetM and PetN. The complex functions as a dimer. The cofactor is [2Fe-2S] cluster.

It localises to the cellular thylakoid membrane. The catalysed reaction is 2 oxidized [plastocyanin] + a plastoquinol + 2 H(+)(in) = 2 reduced [plastocyanin] + a plastoquinone + 4 H(+)(out). Its function is as follows. Component of the cytochrome b6-f complex, which mediates electron transfer between photosystem II (PSII) and photosystem I (PSI), cyclic electron flow around PSI, and state transitions. This chain is Cytochrome b6-f complex iron-sulfur subunit 1, found in Trichormus variabilis (strain ATCC 29413 / PCC 7937) (Anabaena variabilis).